Reading from the N-terminus, the 194-residue chain is ATP-dependent Clp protease proteolytic subunit (194 aa).

The Nucleophile role is filled by S98. H123 is a catalytic residue.

Belongs to the peptidase S14 family. Fourteen ClpP subunits assemble into 2 heptameric rings which stack back to back to give a disk-like structure with a central cavity, resembling the structure of eukaryotic proteasomes.

Its subcellular location is the cytoplasm. The enzyme catalyses Hydrolysis of proteins to small peptides in the presence of ATP and magnesium. alpha-casein is the usual test substrate. In the absence of ATP, only oligopeptides shorter than five residues are hydrolyzed (such as succinyl-Leu-Tyr-|-NHMec, and Leu-Tyr-Leu-|-Tyr-Trp, in which cleavage of the -Tyr-|-Leu- and -Tyr-|-Trp bonds also occurs).. Its function is as follows. Cleaves peptides in various proteins in a process that requires ATP hydrolysis. Has a chymotrypsin-like activity. Plays a major role in the degradation of misfolded proteins. This Staphylococcus saprophyticus subsp. saprophyticus (strain ATCC 15305 / DSM 20229 / NCIMB 8711 / NCTC 7292 / S-41) protein is ATP-dependent Clp protease proteolytic subunit.